A 224-amino-acid chain; its full sequence is 7-cyano-7-deazaguanine synthase (224 aa).

8–18 is a binding site for ATP; it reads LSGGMDSAAVI. Positions 186, 196, 199, and 202 each coordinate Zn(2+).

Belongs to the QueC family. Zn(2+) is required as a cofactor.

It catalyses the reaction 7-carboxy-7-deazaguanine + NH4(+) + ATP = 7-cyano-7-deazaguanine + ADP + phosphate + H2O + H(+). It participates in purine metabolism; 7-cyano-7-deazaguanine biosynthesis. In terms of biological role, catalyzes the ATP-dependent conversion of 7-carboxy-7-deazaguanine (CDG) to 7-cyano-7-deazaguanine (preQ(0)). This Xanthomonas euvesicatoria pv. vesicatoria (strain 85-10) (Xanthomonas campestris pv. vesicatoria) protein is 7-cyano-7-deazaguanine synthase.